Reading from the N-terminus, the 277-residue chain is 4-hydroxy-3-prenylphenylpyruvate oxygenase/4-hydroxy-3-prenylbenzoate synthase (277 aa).

Belongs to the aldolase class II family. In terms of assembly, homotetramer. Requires Fe(2+) as cofactor.

It catalyses the reaction 3-dimethylallyl-4-hydroxyphenylpyruvate + O2 = 3-dimethylallyl-4-hydroxymandelate + CO2. The enzyme catalyses 3-dimethylallyl-4-hydroxymandelate + O2 = 3-dimethylallyl-4-hydroxybenzoate + CO2 + H2O. It participates in antibiotic biosynthesis. Its activity is regulated as follows. Activated by ascorbate. In terms of biological role, involved in the biosynthesis of ring A of the aminocoumarin antibiotic clorobiocin. Catalyzes two consecutive oxidative decarboxylations of 3-dimethylallyl-4-hydroxyphenylpyruvate (3DMA-4HPP) to yield 3-dimethylallyl-4-hydroxybenzoate (3DMA-4HB) via the 3-dimethylallyl-4-hydroxymandelic acid (3DMA-4HMA) intermediate. This Streptomyces roseochromogenus subsp. oscitans protein is 4-hydroxy-3-prenylphenylpyruvate oxygenase/4-hydroxy-3-prenylbenzoate synthase.